The sequence spans 298 residues: MQRQYNESHRSVMVQETLHYLRPTYNGVYVDGTLGEGGHTKAIIEATSGKCKVIGLDIDEEVLAIAEQNLKEFKENVELFNVSYVDFDLVLESLAVDKVDGFLLDIGVSTYQLKAKGRGFSYEIDEPLDMRMSLSGSVTAADVVNSYPEKELARIIFEYGEEKRYARRIARKIVERRPIQTTIQLVEAIKAALPPQERFRRKRHYATRTFQAIRIEVNGELKGLRTALEKFPNYLKPGGRIVIISFHSLEDRTVKHFFREQDGVTLKILTRKPVVPSVEEVSENPRARSAKLRAAERI.

S-adenosyl-L-methionine-binding positions include 37–39 (GGH), Asp-57, Leu-91, Asp-105, and Gln-112.

It belongs to the methyltransferase superfamily. RsmH family.

Its subcellular location is the cytoplasm. It carries out the reaction cytidine(1402) in 16S rRNA + S-adenosyl-L-methionine = N(4)-methylcytidine(1402) in 16S rRNA + S-adenosyl-L-homocysteine + H(+). In terms of biological role, specifically methylates the N4 position of cytidine in position 1402 (C1402) of 16S rRNA. This Kosmotoga olearia (strain ATCC BAA-1733 / DSM 21960 / TBF 19.5.1) protein is Ribosomal RNA small subunit methyltransferase H.